Consider the following 31-residue polypeptide: Cytochrome b6-f complex subunit 6 (31 aa).

Residues 4-26 (ITSYFGFLLAASTITPALFIGLS) traverse the membrane as a helical segment.

The protein belongs to the PetL family. As to quaternary structure, the 4 large subunits of the cytochrome b6-f complex are cytochrome b6, subunit IV (17 kDa polypeptide, PetD), cytochrome f and the Rieske protein, while the 4 small subunits are PetG, PetL, PetM and PetN. The complex functions as a dimer.

Its subcellular location is the plastid. The protein localises to the chloroplast thylakoid membrane. Its function is as follows. Component of the cytochrome b6-f complex, which mediates electron transfer between photosystem II (PSII) and photosystem I (PSI), cyclic electron flow around PSI, and state transitions. PetL is important for photoautotrophic growth as well as for electron transfer efficiency and stability of the cytochrome b6-f complex. In Buxus microphylla (Littleleaf boxwood), this protein is Cytochrome b6-f complex subunit 6.